We begin with the raw amino-acid sequence, 130 residues long: Large ribosomal subunit protein uL22 (130 aa).

It belongs to the universal ribosomal protein uL22 family. Part of the 50S ribosomal subunit.

This protein binds specifically to 23S rRNA; its binding is stimulated by other ribosomal proteins, e.g. L4, L17, and L20. It is important during the early stages of 50S assembly. It makes multiple contacts with different domains of the 23S rRNA in the assembled 50S subunit and ribosome. Its function is as follows. The globular domain of the protein is located near the polypeptide exit tunnel on the outside of the subunit, while an extended beta-hairpin is found that lines the wall of the exit tunnel in the center of the 70S ribosome. The protein is Large ribosomal subunit protein uL22 of Clavibacter sepedonicus (Clavibacter michiganensis subsp. sepedonicus).